The primary structure comprises 253 residues: Probable transcriptional regulatory protein Synpcc7942_1017 (253 aa).

This sequence belongs to the TACO1 family.

It localises to the cytoplasm. The sequence is that of Probable transcriptional regulatory protein Synpcc7942_1017 from Synechococcus elongatus (strain ATCC 33912 / PCC 7942 / FACHB-805) (Anacystis nidulans R2).